A 340-amino-acid chain; its full sequence is MVSAILEGKPDKNLILVTGRIHPKLAEDVAEQLGIDVLETTAYDFANGEMYVRYTESVRGADVFVLQSHYKPINKAIMEQLIMIDALKRASARSITAVCPLLGYSRQDKKHRGREPISCRLVFDLLKTAGADRIMSVDLHAAQSQGFFDGPVDHLVAMPVLVDYIRDRFQGHLDNVAVVSPDAGRIRVAEQWAQRLGGGPLAFVHKTRDITRPNQAVANRVVGDVAGKDCVLVDDLIDTAGTIAGACHVLQDAGAKSVTVVATHGVLSGPAVERLKNCGAREVVLTDTVPIPEEKRWDGLTVLSIAPLLASAIRAVFEDGSVAELFDTYPEHHGQGFLFA.

ATP-binding positions include 47–49 (NGE) and 106–107 (RQ). Positions 140 and 182 each coordinate Mg(2+). Lys-206 is a catalytic residue. D-ribose 5-phosphate is bound by residues Arg-208, Asp-234, and 238–242 (DTAGT).

This sequence belongs to the ribose-phosphate pyrophosphokinase family. Class I subfamily. Homohexamer. The cofactor is Mg(2+).

Its subcellular location is the cytoplasm. It catalyses the reaction D-ribose 5-phosphate + ATP = 5-phospho-alpha-D-ribose 1-diphosphate + AMP + H(+). The protein operates within metabolic intermediate biosynthesis; 5-phospho-alpha-D-ribose 1-diphosphate biosynthesis; 5-phospho-alpha-D-ribose 1-diphosphate from D-ribose 5-phosphate (route I): step 1/1. Functionally, involved in the biosynthesis of the central metabolite phospho-alpha-D-ribosyl-1-pyrophosphate (PRPP) via the transfer of pyrophosphoryl group from ATP to 1-hydroxyl of ribose-5-phosphate (Rib-5-P). The chain is Ribose-phosphate pyrophosphokinase from Bifidobacterium longum (strain NCC 2705).